The primary structure comprises 943 residues: Isoleucine--tRNA ligase (943 aa).

The short motif at 58–68 (PYANGNIHIGH) is the 'HIGH' region element. Glutamate 567 contacts L-isoleucyl-5'-AMP. The short motif at 608 to 612 (KMSKS) is the 'KMSKS' region element. Lysine 611 serves as a coordination point for ATP. The Zn(2+) site is built by cysteine 906, cysteine 909, cysteine 926, and cysteine 929.

Belongs to the class-I aminoacyl-tRNA synthetase family. IleS type 1 subfamily. As to quaternary structure, monomer. Zn(2+) serves as cofactor.

Its subcellular location is the cytoplasm. It catalyses the reaction tRNA(Ile) + L-isoleucine + ATP = L-isoleucyl-tRNA(Ile) + AMP + diphosphate. Functionally, catalyzes the attachment of isoleucine to tRNA(Ile). As IleRS can inadvertently accommodate and process structurally similar amino acids such as valine, to avoid such errors it has two additional distinct tRNA(Ile)-dependent editing activities. One activity is designated as 'pretransfer' editing and involves the hydrolysis of activated Val-AMP. The other activity is designated 'posttransfer' editing and involves deacylation of mischarged Val-tRNA(Ile). In Pseudomonas savastanoi pv. phaseolicola (strain 1448A / Race 6) (Pseudomonas syringae pv. phaseolicola (strain 1448A / Race 6)), this protein is Isoleucine--tRNA ligase.